The sequence spans 371 residues: Maltose/maltodextrin import ATP-binding protein MalK (371 aa).

The ABC transporter domain maps to V4–I234. Residue G36–S43 participates in ATP binding.

It belongs to the ABC transporter superfamily. Maltooligosaccharide importer (TC 3.A.1.1.1) family. The complex is composed of two ATP-binding proteins (MalK), two transmembrane proteins (MalG and MalK) and a solute-binding protein (MalE).

It localises to the cell inner membrane. It catalyses the reaction D-maltose(out) + ATP + H2O = D-maltose(in) + ADP + phosphate + H(+). In terms of biological role, part of the ABC transporter complex MalEFGK involved in maltose/maltodextrin import. Responsible for energy coupling to the transport system. The protein is Maltose/maltodextrin import ATP-binding protein MalK of Shigella flexneri serotype 5b (strain 8401).